Here is a 255-residue protein sequence, read N- to C-terminus: Putative esterase YitV (255 aa).

The polypeptide is Putative esterase YitV (yitV) (Bacillus subtilis (strain 168)).